Reading from the N-terminus, the 979-residue chain is Peptidyl-glycine alpha-amidating monooxygenase (979 aa).

An N-terminal signal peptide occupies residues Met-1–Ala-24. The tract at residues Met-1 to Gly-497 is peptidylglycine alpha-hydroxylating monooxygenase. A propeptide spanning residues Phe-25–Arg-34 is cleaved from the precursor. Topologically, residues Phe-35–Gly-869 are intragranular. Intrachain disulfides connect Cys-46–Cys-185, Cys-80–Cys-125, Cys-113–Cys-130, Cys-226–Cys-333, and Cys-292–Cys-314. Cu(2+) is bound by residues His-106 and His-107. Residues His-171, His-241, His-243, and Met-313 each contribute to the Cu(2+) site. The segment at Asp-498–Val-823 is peptidyl-alpha-hydroxyglycine alpha-amidating lyase. NHL repeat units lie at residues Val-501–Asp-544, Ala-570–Arg-611, Leu-620–Ser-665, and Gly-673–Asp-717. Val-520 serves as a coordination point for Ca(2+). Arg-533 serves as a coordination point for a protein. Position 585 (His-585) interacts with Zn(2+). Leu-587 contributes to the Ca(2+) binding site. Cys-634 and Cys-655 are oxidised to a cystine. Tyr-654 lines the a protein pocket. Residue His-690 participates in Zn(2+) binding. Cys-702 and Cys-713 are joined by a disulfide. Arg-706 is a binding site for a protein. Asn-765 carries an N-linked (GlcNAc...) asparagine glycan. The NHL 5 repeat unit spans residues Gly-769 to Thr-812. Position 786 (His-786) interacts with Zn(2+). Residue Asp-787 participates in Ca(2+) binding. Residues Val-870–Ile-893 traverse the membrane as a helical segment. The Cytoplasmic portion of the chain corresponds to Arg-894–Ser-979. A phosphoserine mark is found at Ser-924, Ser-925, Ser-935, and Ser-948. Residues Asn-931–Ser-948 are interaction with RASSF9. The disordered stretch occupies residues Gly-943 to Ser-979. The residue at position 949 (Thr-949) is a Phosphothreonine. Ser-952 carries the phosphoserine; by UHMK1 modification. Acidic residues predominate over residues Glu-955–Tyr-968. Ser-964 bears the Phosphoserine mark.

This sequence in the C-terminal section; belongs to the peptidyl-alpha-hydroxyglycine alpha-amidating lyase family. It in the N-terminal section; belongs to the copper type II ascorbate-dependent monooxygenase family. In terms of assembly, monomer. Interacts with RASSF9. Zn(2+) is required as a cofactor. The cofactor is Cu(2+).

It is found in the cytoplasmic vesicle. The protein localises to the secretory vesicle membrane. It catalyses the reaction a [peptide]-C-terminal glycine + 2 L-ascorbate + O2 = a [peptide]-C-terminal (2S)-2-hydroxyglycine + 2 monodehydro-L-ascorbate radical + H2O. The enzyme catalyses a [peptide]-C-terminal (2S)-2-hydroxyglycine = a [peptide]-C-terminal amide + glyoxylate. It carries out the reaction N-dodecanoylglycine + 2 L-ascorbate + O2 = N-dodecanoyl-(2S)-hydroxyglycine + 2 monodehydro-L-ascorbate radical + H2O. The catalysed reaction is N-dodecanoyl-(2S)-hydroxyglycine = dodecanamide + glyoxylate. It catalyses the reaction N-(9Z,12Z,15Z)-octadecatrienoylglycine + 2 L-ascorbate + O2 = N-(9Z,12Z,15Z)-octadecatrienoyl-(2S)-hydroxyglycine + 2 monodehydro-L-ascorbate radical + H2O. The enzyme catalyses N-(9Z,12Z,15Z)-octadecatrienoyl-(2S)-hydroxyglycine = (9Z,12Z,15Z)-octadecatrienamide + glyoxylate. It carries out the reaction N-(9Z-octadecenoyl)glycine + 2 L-ascorbate + O2 = N-(9Z-octadecenoyl)-(2S)-hydroxyglycine + 2 monodehydro-L-ascorbate radical + H2O. The catalysed reaction is N-(9Z-octadecenoyl)-(2S)-hydroxyglycine = (9Z)-octadecenamide + glyoxylate. It catalyses the reaction N-tetradecanoylglycine + 2 L-ascorbate + O2 = N-tetradecanoyl-(2S)-hydroxyglycine + 2 monodehydro-L-ascorbate radical + H2O. The enzyme catalyses N-tetradecanoyl-(2S)-hydroxyglycine = tetradecamide + glyoxylate. It carries out the reaction N-decanoylglycine + 2 L-ascorbate + O2 = N-decanoyl-(2S)-hydroxyglycine + 2 monodehydro-L-ascorbate radical + H2O. The catalysed reaction is N-decanoyl-(2S)-hydroxyglycine = decanamide + glyoxylate. It catalyses the reaction N-octanoylglycine + 2 L-ascorbate + O2 = N-octanoyl-(2S)-hydroxyglycine + 2 monodehydro-L-ascorbate radical + H2O. The enzyme catalyses N-octanoyl-(2S)-hydroxyglycine = octanamide + glyoxylate. PAM activity is inhibited by EDTA, phenylglyoxal and diethyl pyrocarbonate. PAL activity is stimulated by cadmium and inhibited by mercury. Its function is as follows. Bifunctional enzyme that catalyzes amidation of the C-terminus of proteins. Alpha-amidation is present at the C-terminus of many endocrine hormones and neuropeptides and is required for their activity. C-terminal amidation also takes place in response to protein fragmentation triggered by oxidative stress, promoting degradation of amidated protein fragments by the proteasome. Alpha-amidation involves two sequential reactions, both of which are catalyzed by separate catalytic domains of the enzyme. The first step, catalyzed by peptidyl alpha-hydroxylating monooxygenase (PHM) domain, is the copper-, ascorbate-, and O2- dependent stereospecific hydroxylation (with S stereochemistry) at the alpha-carbon (C-alpha) of the C-terminal glycine of the peptidylglycine substrate. The second step, catalyzed by the peptidylglycine amidoglycolate lyase (PAL) domain, is the zinc-dependent cleavage of the N-C-alpha bond, producing the alpha-amidated peptide and glyoxylate. Similarly, catalyzes the two-step conversion of an N-fatty acylglycine to a primary fatty acid amide and glyoxylate. The chain is Peptidyl-glycine alpha-amidating monooxygenase from Mus musculus (Mouse).